The primary structure comprises 58 residues: Sec-independent protein translocase protein TatA (58 aa).

A helical transmembrane segment spans residues Met-1–Phe-21.

This sequence belongs to the TatA/E family. In terms of assembly, forms a complex with TatC.

It localises to the cell membrane. Part of the twin-arginine translocation (Tat) system that transports large folded proteins containing a characteristic twin-arginine motif in their signal peptide across membranes. TatA could form the protein-conducting channel of the Tat system. This is Sec-independent protein translocase protein TatA from Bacillus cytotoxicus (strain DSM 22905 / CIP 110041 / 391-98 / NVH 391-98).